A 712-amino-acid polypeptide reads, in one-letter code: TGF-beta-activated kinase 1 and MAP3K7-binding protein 3 (712 aa).

At Ala2 the chain carries N-acetylalanine. Positions 8-51 (LDIQVLHDLRQRFPEIPEGVVSQCMLQNNNNLEACCRALSQESS) constitute a CUE domain. Phosphoserine occurs at positions 60, 101, and 103. 4 disordered regions span residues 141-189 (FMNE…HIPR), 227-345 (PGSI…KQGS), 369-447 (TVEP…SPRV), and 475-509 (ERSAAPEPIQPISVIPGSGGEKGSHKYQRSSSSGS). The span at 163–173 (MQTGMNPSAMQ) shows a compositional bias: polar residues. Composition is skewed to low complexity over residues 233 to 249 (RQTSQSSSGRQTPQSTP) and 269 to 290 (YPHQQNYQPSQYSPKQQQIPQS). Pro residues predominate over residues 322–332 (PPSPSTTPPHP). Composition is skewed to polar residues over residues 336–345 (GPPSYQKQGS) and 371–404 (EPSQRPGTAINRSPSPISNQPSPRNQHSLYTATT). Ser385 carries the post-translational modification Phosphoserine. Position 404 is a phosphothreonine (Thr404). Over residues 405 to 417 (PPSSSPSRGISSQ) the composition is skewed to low complexity. Ser409 and Ser492 each carry phosphoserine. Ser506 is modified (phosphoserine; by MAPKAPK2 and MAPKAPK3). The stretch at 517–559 (ALLLHQRARMERLAKQLKLEKEELERLKSEVNGMEHDLMQRRL) forms a coiled coil. A disordered region spans residues 609–636 (MNNFYDNIEPGPVVPPKPSKKDSSDPCT). Over residues 627–636 (SKKDSSDPCT) the composition is skewed to basic and acidic residues. Lys649 participates in a covalent cross-link: Glycyl lysine isopeptide (Lys-Gly) (interchain with G-Cter in ubiquitin). The segment covering 658–667 (QAAAADEHRT) has biased composition (basic and acidic residues). Positions 658 to 682 (QAAAADEHRTGSTQSPRTQPRDEDY) are disordered. A RanBP2-type zinc finger spans residues 682 to 712 (YEGAPWNCDSCTFLNHPALNRCEQCEMPRYT). Cys692 bears the (Microbial infection) S-methylcysteine mark.

In terms of assembly, interacts with TAB1, TAB2, MAP3K7, TRAF2 and TRAF6. The minimal TAB3-containing complex (TAB1-MAP3K7-TAB3) appears not to contain TAB2. However, it seems sensible to consider that TAB2 may also join this complex and may act in a cooperative manner with TAB3. Interacts with DYNC2I2 (via the WD domains). Interacts with RBCK1. Binds 'Lys-63'-linked polyubiquitin chains. Interacts with TRIM5. Interacts with TRIM38 (via B30.2/SPRY domain), leading to its translocation to lysosomes and degradation. Interacts with ASB1. (Microbial infection) Interacts with M.tuberculosis PtpA, which blocks the NF-kappa-B signaling pathway. Post-translationally, ubiquitinated; following IL1 stimulation or TRAF6 overexpression. Ubiquitinated by AMFR via 'Lys-27'-linked polyubiquitination; leading to TAK1/MAP3K7 activation. Degraded in a lysosome-dependent manner following interaction with TRIM38. In terms of processing, phosphorylated at Ser-506 by MAPKAPK2 and MAPKAPK3 following IL1 treatment. Post-translationally, (Microbial infection) Methylated at Cys-692 by enteropathogenic E.coli protein NleE or S.flexneri protein OspZ: methylation disrupts zinc-binding and ability to bind 'Lys-63'-linked ubiquitin, leading to NF-kappa-B inactivation. As to expression, widely expressed. Constitutively overexpressed in certain tumor tissues. Major transcript. In terms of tissue distribution, minor transcript.

In terms of biological role, adapter required to activate the JNK and NF-kappa-B signaling pathways through the specific recognition of 'Lys-63'-linked polyubiquitin chains by its RanBP2-type zinc finger (NZF). Acts as an adapter linking MAP3K7/TAK1 and TRAF6 to 'Lys-63'-linked polyubiquitin chains. The RanBP2-type zinc finger (NZF) specifically recognizes Lys-63'-linked polyubiquitin chains unanchored or anchored to the substrate proteins such as RIPK1/RIP1 and RIPK2: this acts as a scaffold to organize a large signaling complex to promote autophosphorylation of MAP3K7/TAK1, and subsequent activation of I-kappa-B-kinase (IKK) core complex by MAP3K7/TAK1. Its function is as follows. May be an oncogenic factor. This chain is TGF-beta-activated kinase 1 and MAP3K7-binding protein 3, found in Homo sapiens (Human).